We begin with the raw amino-acid sequence, 439 residues long: Synaptotagmin-B (439 aa).

Residues 1–74 lie on the Vesicular side of the membrane; it reads MQAEMNQSAE…KEKFMNELQK (74 aa). Asn6 and Asn46 each carry an N-linked (GlcNAc...) asparagine glycan. The helical transmembrane segment at 75–101 threads the bilayer; sequence IPLPPWALIAIAIVSGLLLLTCCLCIC. Over 102-439 the chain is Cytoplasmic; that stretch reads KKCCCKKKKN…EVDVALGLKK (338 aa). A disordered region spans residues 113-155; sequence KEKGKGKKNDINMKDVKGSGGNQDDDDAETGLTEGEDKEEEAK. Residues 119–129 are compositionally biased toward basic and acidic residues; the sequence is KKNDINMKDVK. Residues 135–151 show a composition bias toward acidic residues; the sequence is QDDDDAETGLTEGEDKE. The segment at 153-399 is phospholipid binding; it reads EAKEEEKLGK…AIGKIFVGSN (247 aa). 2 C2 domains span residues 159–278 and 290–423; these read KLGK…EEWR and KLGD…AQWH. Leu189, Asp190, Asp196, Asp248, Phe249, Asp250, Ser253, Lys254, Asp256, Asp321, Asp327, Asp381, Asp383, and Asp389 together coordinate Ca(2+).

It belongs to the synaptotagmin family. As to quaternary structure, homodimer or homotrimer (possible). The cofactor is Ca(2+). Spinal cord, brainstem, midbrain and electric organ.

It is found in the cytoplasmic vesicle. It localises to the secretory vesicle. The protein resides in the synaptic vesicle membrane. Its subcellular location is the synapse. In terms of biological role, may have a regulatory role in the membrane interactions during trafficking of synaptic vesicles at the active zone of the synapse. It binds acidic phospholipids with a specificity that requires the presence of both an acidic head group and a diacyl backbone. The chain is Synaptotagmin-B (P65-B) from Diplobatis ommata (Ocellated electric ray).